The chain runs to 471 residues: Proline--tRNA ligase 2 (471 aa).

This sequence belongs to the class-II aminoacyl-tRNA synthetase family. ProS type 3 subfamily. As to quaternary structure, homodimer.

The protein resides in the cytoplasm. The enzyme catalyses tRNA(Pro) + L-proline + ATP = L-prolyl-tRNA(Pro) + AMP + diphosphate. In terms of biological role, catalyzes the attachment of proline to tRNA(Pro) in a two-step reaction: proline is first activated by ATP to form Pro-AMP and then transferred to the acceptor end of tRNA(Pro). The chain is Proline--tRNA ligase 2 from Streptomyces avermitilis (strain ATCC 31267 / DSM 46492 / JCM 5070 / NBRC 14893 / NCIMB 12804 / NRRL 8165 / MA-4680).